Reading from the N-terminus, the 687-residue chain is Glycine--tRNA ligase beta subunit (687 aa).

Belongs to the class-II aminoacyl-tRNA synthetase family. In terms of assembly, tetramer of two alpha and two beta subunits.

The protein localises to the cytoplasm. It catalyses the reaction tRNA(Gly) + glycine + ATP = glycyl-tRNA(Gly) + AMP + diphosphate. In Lactobacillus helveticus (strain DPC 4571), this protein is Glycine--tRNA ligase beta subunit.